Consider the following 332-residue polypeptide: Biotin synthase (332 aa).

One can recognise a Radical SAM core domain in the interval 53–282; the sequence is HFGKKVKLNM…TKEIRISGGR (230 aa). Residues cysteine 71, cysteine 75, and cysteine 78 each coordinate [4Fe-4S] cluster. Cysteine 115, cysteine 147, cysteine 207, and arginine 277 together coordinate [2Fe-2S] cluster.

The protein belongs to the radical SAM superfamily. Biotin synthase family. As to quaternary structure, homodimer. It depends on [4Fe-4S] cluster as a cofactor. Requires [2Fe-2S] cluster as cofactor.

The enzyme catalyses (4R,5S)-dethiobiotin + (sulfur carrier)-SH + 2 reduced [2Fe-2S]-[ferredoxin] + 2 S-adenosyl-L-methionine = (sulfur carrier)-H + biotin + 2 5'-deoxyadenosine + 2 L-methionine + 2 oxidized [2Fe-2S]-[ferredoxin]. It participates in cofactor biosynthesis; biotin biosynthesis; biotin from 7,8-diaminononanoate: step 2/2. Catalyzes the conversion of dethiobiotin (DTB) to biotin by the insertion of a sulfur atom into dethiobiotin via a radical-based mechanism. This is Biotin synthase from Bacillus cereus (strain G9842).